We begin with the raw amino-acid sequence, 692 residues long: Protein artemis (692 aa).

Threonine 380 is modified (phosphothreonine). Serine 385 is subject to Phosphoserine. Disordered stretches follow at residues 504–555 (LENF…DSQS) and 640–664 (STNA…LPKR). Positions 506 to 520 (NFPSSTVAGGSQSPK) are enriched in polar residues. A compositionally biased stretch (low complexity) spans 530–543 (THISSQNSSQSTHI). Polar residues-rich tracts occupy residues 544-555 (TEQGSQGWDSQS) and 640-650 (STNADSQSSSD). Phosphoserine; by ATM is present on serine 645.

Belongs to the DNA repair metallo-beta-lactamase (DRMBL) family. In terms of assembly, interacts with LIG4; the interaction is direct. Interacts with ATM. Interacts with BRCA1. Interacts with PRKDC. Interacts with TP53BP1. Also exhibits ATM- and phosphorylation-dependent interaction with the MRN complex, composed of MRE11, RAD50, and NBN. Phosphorylation on undefined residues by PRKDC may stimulate endonucleolytic activity on 5' and 3' hairpins and overhangs. PRKDC must remain present, even after phosphorylation, for efficient hairpin opening. Also phosphorylated by ATM in response to ionizing radiation (IR) and by ATR in response to ultraviolet (UV) radiation. Ubiquitously expressed, with highest levels in the kidney, lung, pancreas and placenta (at the mRNA level). Expression is not increased in thymus or bone marrow, sites of V(D)J recombination.

It is found in the nucleus. Functionally, nuclease involved in DNA non-homologous end joining (NHEJ); required for double-strand break repair and V(D)J recombination. Required for V(D)J recombination, the process by which exons encoding the antigen-binding domains of immunoglobulins and T-cell receptor proteins are assembled from individual V, (D), and J gene segments. V(D)J recombination is initiated by the lymphoid specific RAG endonuclease complex, which generates site specific DNA double strand breaks (DSBs). These DSBs present two types of DNA end structures: hairpin sealed coding ends and phosphorylated blunt signal ends. These ends are independently repaired by the non homologous end joining (NHEJ) pathway to form coding and signal joints respectively. This protein exhibits single-strand specific 5'-3' exonuclease activity in isolation and acquires endonucleolytic activity on 5' and 3' hairpins and overhangs when in a complex with PRKDC. The latter activity is required specifically for the resolution of closed hairpins prior to the formation of the coding joint. Also required for the repair of complex DSBs induced by ionizing radiation, which require substantial end-processing prior to religation by NHEJ. In Homo sapiens (Human), this protein is Protein artemis.